Reading from the N-terminus, the 260-residue chain is Coiled-coil domain-containing protein 127 (260 aa).

A coiled-coil region spans residues 49 to 135; sequence QKEVEKEREA…QVMQEKRQVQ (87 aa).

This is Coiled-coil domain-containing protein 127 (CCDC127) from Homo sapiens (Human).